Consider the following 85-residue polypeptide: Beta-insect depressant toxin Lqh-dprIT3d (85 aa).

The signal sequence occupies residues 1–21; it reads MKLLLLLTISASMLIEGLVNA. The region spanning 22–82 is the LCN-type CS-alpha/beta domain; it reads DGYIRGGDGC…EWDYETNTCG (61 aa). 4 disulfide bridges follow: Cys31/Cys81, Cys35/Cys56, Cys42/Cys63, and Cys46/Cys65. Residue Gly82 is modified to Glycine amide.

Belongs to the long (4 C-C) scorpion toxin superfamily. Sodium channel inhibitor family. Beta subfamily. Expressed by the venom gland.

It localises to the secreted. In terms of biological role, depressant insect beta-toxins cause a transient contraction paralysis followed by a slow flaccid paralysis. They bind voltage-independently at site-4 of sodium channels (Nav) and block action potentials, primarily by depolarizing the axonal membrane and suppressing the sodium current. This depressant toxin is active only on insects. It is found in a relatively small amount in the venom, and its activity on insects is 10-fold higher compared to other known depressant toxins. This chain is Beta-insect depressant toxin Lqh-dprIT3d, found in Leiurus hebraeus (Hebrew deathstalker scorpion).